A 341-amino-acid chain; its full sequence is Processive diacylglycerol beta-glycosyltransferase (341 aa).

This sequence belongs to the glycosyltransferase 2 family. Requires Mg(2+) as cofactor.

Its subcellular location is the cell membrane. The enzyme catalyses a 1,2-diacyl-sn-glycerol + UDP-alpha-D-glucose = a 1,2-diacyl-3-O-(beta-D-glucopyranosyl)-sn-glycerol + UDP + H(+). It carries out the reaction a 1,2-diacyl-sn-glycerol + UDP-alpha-D-galactose = a 1,2-diacyl-3-O-(beta-D-galactosyl)-sn-glycerol + UDP + H(+). The catalysed reaction is a 1,2-diacyl-3-O-(beta-D-galactosyl)-sn-glycerol + UDP-alpha-D-glucose = a 1,2-diacyl-3-O-[beta-D-glucopyranosyl-(1-&gt;6)-beta-D-galactopyranosyl]-sn-glycerol + UDP + H(+). It catalyses the reaction a 1,2-diacyl-3-O-(beta-D-galactosyl)-sn-glycerol + UDP-alpha-D-galactose = a 1,2-diacyl-3-O-[beta-D-galactosyl-(1-&gt;6)-beta-D-galactosyl]-sn-glycerol + UDP + H(+). With respect to regulation, activated by the negatively charged lipid phosphatidylglycerol (PG). Its function is as follows. Processive glycosyltransferase involved in the biosynthesis of both the non-bilayer-prone beta-monoglycosyldiacylglycerol and the bilayer-forming membrane lipid glucosyl-galactosyldiacylglycerol and digalactosyl-diacylglycerol. These components contribute to regulate the properties and stability of the membrane. Catalyzes sequentially the transfers of glucosyl or galactosyl residues from UDP-Glc or UDP-Gal to diacylglycerol (DAG) acceptor to form the corresponding beta-glycosyl-DAG (3-O-(beta-D-glycopyranosyl)-1,2-diacyl-sn-glycerol). Then, only beta-galactosyl-DAG (3-O-(beta-D-galactopyranosyl)-1,2-diacyl-sn-glycerol) can act as acceptor to give the beta-glycosyl-beta-galactosyl-DAG product (3-O-(beta-D-glycopyranosyl-(1-&gt;6)-D-galactopyranosyl)-1,2-diacyl-sn-glycerol). It can also use alpha-Gal-beta-Gal-DAG, ceramide (Cer) and beta-Gal-Cer as sugar acceptors. The enzyme is supposed to be mainly a galactosyltransferase, with higher glycosyltransferase activity for the addition of the second glycosyl on beta-Gal-DAG as acceptor. The main glycolipid produced in vivo is beta-Glc-beta-Gal-DAG with a beta-1,6 linkage. This chain is Processive diacylglycerol beta-glycosyltransferase, found in Mycoplasma pneumoniae (strain ATCC 29342 / M129 / Subtype 1) (Mycoplasmoides pneumoniae).